The primary structure comprises 316 residues: Olfactory receptor 51J1 (316 aa).

The Extracellular portion of the chain corresponds to 1–31; it reads MKISNNSLGFLPTTFILVGIPGLESEHLWIS. Residue Asn5 is glycosylated (N-linked (GlcNAc...) asparagine). Residues 32–52 traverse the membrane as a helical segment; the sequence is VPFSLIYIIIFLGNGIILHVI. Residues 53–63 lie on the Cytoplasmic side of the membrane; sequence RTDIALHQPMY. A helical transmembrane segment spans residues 64–84; sequence LFLAMLALAEVRVSASTLPTV. The Extracellular portion of the chain corresponds to 85–104; the sequence is LGIFLFGNTEISLEACLFPD. Cys100 and Cys191 form a disulfide bridge. Residues 105-125 traverse the membrane as a helical segment; that stretch reads VLHPFFIHDGASCAAGHVFGP. Residues 126–161 are Cytoplasmic-facing; it reads LYSHLQPTELHSYPDTAQGLWHRSYYRTEKHYAHGS. Residues 162–182 traverse the membrane as a helical segment; the sequence is VAHSLMASALLWPQCPLTFLL. Over 183-191 the chain is Extracellular; it reads SAPQSYLSC. A helical transmembrane segment spans residues 192-212; the sequence is GNISVNNIYGIFIVTSTFGLD. The Cytoplasmic segment spans residues 213–242; the sequence is SLLIVISYGLILHTVLGIATGEGRKKALNT. Residues 243–263 form a helical membrane-spanning segment; the sequence is CGSHVCAVLAYYVPMIGLSIV. Residues 264-275 lie on the Extracellular side of the membrane; that stretch reads HRLGHRVSPLLQ. Residues 276-296 traverse the membrane as a helical segment; the sequence is AMMANAYLFFPPVVNPIVYSI. The Cytoplasmic portion of the chain corresponds to 297–316; it reads KTKEIHGAIVRMLLEKRRRV.

The protein belongs to the G-protein coupled receptor 1 family.

It is found in the cell membrane. Odorant receptor. The protein is Olfactory receptor 51J1 (OR51J1) of Homo sapiens (Human).